Reading from the N-terminus, the 122-residue chain is Selenoprotein H (122 aa).

An N6-acetyllysine modification is found at Lys20. Positions 41 to 44 form a cross-link, cysteinyl-selenocysteine (Cys-Sec); redox-active; it reads CTSU. A non-standard amino acid (selenocysteine) is located at residue Sec44.

The protein belongs to the SelWTH family.

May be involved in a redox-related process. In Homo sapiens (Human), this protein is Selenoprotein H.